Reading from the N-terminus, the 86-residue chain is U15-lycotoxin-Ls1c (86 aa).

The N-terminal stretch at 1–20 (MNSKIFAVLLLLAFLSCVLS) is a signal peptide. The WAP domain maps to 21–66 (DQYCPKSSITACKKMNIRNDCCKDDDCTGGSWCCATPCGNICKYPT). Intrachain disulfides connect Cys24–Cys54, Cys32–Cys58, Cys41–Cys53, Cys42–Cys80, and Cys47–Cys62.

This sequence belongs to the venom protein 11 family. 01 (wap-1) subfamily. In terms of processing, contains 5 disulfide bonds. In terms of tissue distribution, expressed by the venom gland.

It is found in the secreted. Its function is as follows. Has antibacterial activity. The protein is U15-lycotoxin-Ls1c of Lycosa singoriensis (Wolf spider).